An 819-amino-acid chain; its full sequence is Nuclear pore complex protein Nup93 (819 aa).

T49 carries the post-translational modification Phosphothreonine. Phosphoserine is present on residues S52, S66, S72, S75, S80, S430, and S767.

Belongs to the nucleoporin interacting component (NIC) family. Part of the nuclear pore complex (NPC). Component of the p62 complex, a complex composed of NUP62 and NUP54. Forms a complex with NUP35, NUP155, NUP205 and lamin B; the interaction with NUP35 is direct. Does not interact with TPR. Interacts with SMAD4 and IPO7; translocates SMAD4 to the nucleus through the NPC upon BMP7 stimulation resulting in activation of SMAD4 signaling.

The protein localises to the nucleus membrane. The protein resides in the nucleus. Its subcellular location is the nuclear pore complex. It is found in the nucleus envelope. Plays a role in the nuclear pore complex (NPC) assembly and/or maintenance. May anchor nucleoporins, but not NUP153 and TPR, to the NPC. During renal development, regulates podocyte migration and proliferation through SMAD4 signaling. The chain is Nuclear pore complex protein Nup93 (NUP93) from Pongo abelii (Sumatran orangutan).